A 999-amino-acid chain; its full sequence is Probable hemoglobin and hemoglobin-haptoglobin-binding protein 4 (999 aa).

The signal sequence occupies residues 1 to 24 (MTNFRLNVLAYSVMLGLTASVAYA). A disordered region spans residues 25–52 (EPTNQPTNQPTNQPTNQPTNQPTNQNSN). A run of 6 repeats spans residues 26 to 29 (PTNQ), 30 to 33 (PTNQ), 34 to 37 (PTNQ), 38 to 41 (PTNQ), 42 to 45 (PTNQ), and 46 to 49 (PTNQ). Residues 26-49 (PTNQPTNQPTNQPTNQPTNQPTNQ) are 6 X 4 AA tandem repeats of P-T-N-Q. Residues 26-50 (PTNQPTNQPTNQPTNQPTNQPTNQN) are compositionally biased toward low complexity. A TonB box motif is present at residues 58–65 (EQINVLGS). The TBDR plug domain maps to 68–195 (NNDNTPPKIA…LGGAVLFETK (128 aa)). In terms of domain architecture, TBDR beta-barrel spans 203–999 (EKDWHIGYKA…NYKLSAEITF (797 aa)). Positions 982 to 999 (NRFYSPGRNYKLSAEITF) match the TonB C-terminal box motif.

It belongs to the TonB-dependent receptor family. Hemoglobin/haptoglobin binding protein subfamily.

It is found in the cell outer membrane. Its function is as follows. Acts as a receptor for hemoglobin or the hemoglobin/haptoglobin complex of the human host and is required for heme uptake. In Haemophilus influenzae (strain ATCC 51907 / DSM 11121 / KW20 / Rd), this protein is Probable hemoglobin and hemoglobin-haptoglobin-binding protein 4.